A 164-amino-acid polypeptide reads, in one-letter code: uncharacterized protein (164 aa).

This is an uncharacterized protein from Mycobacterium tuberculosis (strain CDC 1551 / Oshkosh).